Reading from the N-terminus, the 240-residue chain is Probable hydroxyacylglutathione hydrolase (240 aa).

Residues H33, H35, D37, H38, H95, and D119 each contribute to the Zn(2+) site. Residues R128, 158 to 160 (HEY), and 234 to 237 (REEK) each bind substrate. Residue H158 participates in Zn(2+) binding.

This sequence belongs to the metallo-beta-lactamase superfamily. Glyoxalase II family. The cofactor is Zn(2+).

The catalysed reaction is an S-(2-hydroxyacyl)glutathione + H2O = a 2-hydroxy carboxylate + glutathione + H(+). Its pathway is secondary metabolite metabolism; methylglyoxal degradation; (R)-lactate from methylglyoxal: step 2/2. Functionally, thiolesterase that catalyzes the hydrolysis of S-D-lactoyl-glutathione to form glutathione and D-lactic acid. This Schistosoma mansoni (Blood fluke) protein is Probable hydroxyacylglutathione hydrolase.